Here is a 294-residue protein sequence, read N- to C-terminus: Flavin-dependent thymidylate synthase (294 aa).

The region spanning 27 to 250 (GFIRVIDYMG…PFTYEAFEEY (224 aa)) is the ThyX domain. Residues Thr73, 96–98 (RHR), and Glu104 contribute to the FAD site. Residues 93–96 (QWIR), 104–108 (EYSAR), and Arg189 each bind dUMP. Positions 96–106 (RHRTASVNEYS) match the ThyX motif motif. FAD-binding positions include 205 to 207 (NLH) and His211. Arg216 contacts dUMP. Arg216 serves as the catalytic Involved in ionization of N3 of dUMP, leading to its activation.

The protein belongs to the thymidylate synthase ThyX family. As to quaternary structure, homotetramer. Requires FAD as cofactor.

It carries out the reaction dUMP + (6R)-5,10-methylene-5,6,7,8-tetrahydrofolate + NADPH + H(+) = dTMP + (6S)-5,6,7,8-tetrahydrofolate + NADP(+). It functions in the pathway pyrimidine metabolism; dTTP biosynthesis. Functionally, catalyzes the reductive methylation of 2'-deoxyuridine-5'-monophosphate (dUMP) to 2'-deoxythymidine-5'-monophosphate (dTMP) while utilizing 5,10-methylenetetrahydrofolate (mTHF) as the methyl donor, and NADPH and FADH(2) as the reductant. The chain is Flavin-dependent thymidylate synthase from Rickettsia bellii (strain RML369-C).